A 254-amino-acid polypeptide reads, in one-letter code: Isoprenyl transferase (254 aa).

Residue D12 is part of the active site. Residue D12 coordinates Mg(2+). Residues 13 to 16 (GNGR), W17, R25, H29, and 57 to 59 (SSE) contribute to the substrate site. N60 (proton acceptor) is an active-site residue. Substrate is bound by residues W61, R63, R180, and 186-188 (RLS). Position 199 (E199) interacts with Mg(2+).

Belongs to the UPP synthase family. In terms of assembly, homodimer. It depends on Mg(2+) as a cofactor.

Functionally, catalyzes the condensation of isopentenyl diphosphate (IPP) with allylic pyrophosphates generating different type of terpenoids. In Brucella abortus biovar 1 (strain 9-941), this protein is Isoprenyl transferase.